Reading from the N-terminus, the 327-residue chain is DNA-directed RNA polymerase subunit alpha (327 aa).

The segment at 1-233 (MQNSASEFLK…DQLSIFADLQ (233 aa)) is alpha N-terminal domain (alpha-NTD). The alpha C-terminal domain (alpha-CTD) stretch occupies residues 247 to 327 (IDPILLRPVD…NWPPAGLEKP (81 aa)).

This sequence belongs to the RNA polymerase alpha chain family. In terms of assembly, homodimer. The RNAP catalytic core consists of 2 alpha, 1 beta, 1 beta' and 1 omega subunit. When a sigma factor is associated with the core the holoenzyme is formed, which can initiate transcription.

It carries out the reaction RNA(n) + a ribonucleoside 5'-triphosphate = RNA(n+1) + diphosphate. In terms of biological role, DNA-dependent RNA polymerase catalyzes the transcription of DNA into RNA using the four ribonucleoside triphosphates as substrates. The polypeptide is DNA-directed RNA polymerase subunit alpha (Chromobacterium violaceum (strain ATCC 12472 / DSM 30191 / JCM 1249 / CCUG 213 / NBRC 12614 / NCIMB 9131 / NCTC 9757 / MK)).